The sequence spans 913 residues: Trafficking kinesin-binding protein 2 (913 aa).

Over residues 11-21 the composition is skewed to polar residues; it reads SQTGEENLMSS. Residues 11-31 form a disordered region; the sequence is SQTGEENLMSSNHRDSESITD. The HAP1 N-terminal domain occupies 48 to 353; the sequence is EEQLPQYKLR…QEEIKELRNK (306 aa). Residues 134–355 adopt a coiled-coil conformation; sequence QALLKRNHVL…EIKELRNKAG (222 aa). Residues 359-507 form an interaction with HGS region; the sequence is HLCFSQAYGV…KQFFAEEWER (149 aa). Residues 442–478 are disordered; the sequence is ESGVQQTEDKTLPNQGSSTEVPGNSHPRDPPGLPEDS. Residues 453-463 are compositionally biased toward polar residues; sequence LPNQGSSTEVP. Residues 502-519 adopt a coiled-coil conformation; the sequence is AEEWERKLQILAEQEEEV. 2 stretches are compositionally biased toward low complexity: residues 688 to 704 and 780 to 789; these read SSGFPSLSCGSSAGSAS and PSQSPCSSPV. 2 disordered regions span residues 688 to 707 and 769 to 790; these read SSGFPSLSCGSSAGSASNTA and ALATPSTPPNSPSQSPCSSPVP.

The protein belongs to the milton family. As to quaternary structure, interacts with RHOT1/Miro-1 and RHOT2/Miro-2. Interacts with GABA-A receptor and O-GlcNAc transferase. Interacts with HGS. Post-translationally, O-glycosylated. Present in heart and brain (at protein level).

The protein localises to the cytoplasm. It is found in the early endosome. Its subcellular location is the mitochondrion. Its function is as follows. May regulate endosome-to-lysosome trafficking of membrane cargo, including EGFR. The chain is Trafficking kinesin-binding protein 2 (Trak2) from Rattus norvegicus (Rat).